Consider the following 54-residue polypeptide: Snake venom 5'-nucleotidase (54 aa).

Positions 11 and 13 each coordinate Zn(2+). The N-linked (GlcNAc...) asparagine glycan is linked to asparagine 46.

This sequence belongs to the 5'-nucleotidase family. The cofactor is Zn(2+). In terms of processing, venom 5'-nucleotidases (or a part thereof) may be released into the venom via exosome-like vesicles. They may be attached via a GPI anchor to the membrane of these vesicles. Soluble forms of 5'-nucleotidase might be released by cleavage of the ectodomain in the exosome-like vesicles or venom gland cells. As to expression, expressed by the venom gland.

It is found in the membrane. The catalysed reaction is a ribonucleoside 5'-phosphate + H2O = a ribonucleoside + phosphate. Functionally, hydrolyzes nucleotides into nucleosides. Snake venom 5'-nucleotidases are widely distributed among venomous snake taxa, but there is a lack of information about their biological activities. They have been shown to inhibit platelet aggregation. This effect may be due to the liberation of inhibitory AMP or adenosine by its action on ADP released upon initiation of aggregation. Venom 5'-nucleotidases are also known to synergistically act in vivo with other toxins like ADPases, phospholipases, and disintegrins to exert a more pronounced anti-coagulant effect. The sequence is that of Snake venom 5'-nucleotidase from Gloydius blomhoffii blomhoffii (Japanese mamushi).